We begin with the raw amino-acid sequence, 162 residues long: NADH-quinone oxidoreductase subunit I 2 (162 aa).

4Fe-4S ferredoxin-type domains lie at leucine 53–glutamate 83 and threonine 93–isoleucine 122. Cysteine 63, cysteine 66, cysteine 69, cysteine 73, cysteine 102, cysteine 105, cysteine 108, and cysteine 112 together coordinate [4Fe-4S] cluster.

It belongs to the complex I 23 kDa subunit family. As to quaternary structure, NDH-1 is composed of 14 different subunits. Subunits NuoA, H, J, K, L, M, N constitute the membrane sector of the complex. [4Fe-4S] cluster is required as a cofactor.

The protein resides in the cell inner membrane. It carries out the reaction a quinone + NADH + 5 H(+)(in) = a quinol + NAD(+) + 4 H(+)(out). Its function is as follows. NDH-1 shuttles electrons from NADH, via FMN and iron-sulfur (Fe-S) centers, to quinones in the respiratory chain. The immediate electron acceptor for the enzyme in this species is believed to be ubiquinone. Couples the redox reaction to proton translocation (for every two electrons transferred, four hydrogen ions are translocated across the cytoplasmic membrane), and thus conserves the redox energy in a proton gradient. In Nitrosospira multiformis (strain ATCC 25196 / NCIMB 11849 / C 71), this protein is NADH-quinone oxidoreductase subunit I 2.